We begin with the raw amino-acid sequence, 476 residues long: Eukaryotic translation initiation factor 3 subunit L (476 aa).

The PCI domain occupies 257-452 (DAIRMFSHIL…DLDYALEKDL (196 aa)).

This sequence belongs to the eIF-3 subunit L family. Component of the eukaryotic translation initiation factor 3 (eIF-3) complex.

The protein resides in the cytoplasm. Component of the eukaryotic translation initiation factor 3 (eIF-3) complex, which is involved in protein synthesis of a specialized repertoire of mRNAs and, together with other initiation factors, stimulates binding of mRNA and methionyl-tRNAi to the 40S ribosome. The eIF-3 complex specifically targets and initiates translation of a subset of mRNAs involved in cell proliferation. The protein is Eukaryotic translation initiation factor 3 subunit L of Emericella nidulans (strain FGSC A4 / ATCC 38163 / CBS 112.46 / NRRL 194 / M139) (Aspergillus nidulans).